Consider the following 277-residue polypeptide: MKLCGFDVGIDQPLFLIAGPCVIESEQLAIETAGQLKELTDALGIPFIYKSSYDKANRSSTKSFRGLGVEEGLRILQKVKDEIGVPVLTDVHEDTPLDEVASVVDVMQTPAFLVRQTNFIQNVCRQGLPVNIKKGQFQAPWDMDQVVAKAREVGNDQIMVCDRGTSFGYNTLISDMRGLASMRQTGCPVVFDATHSVQQPGGQGTTSGGQREMVPVLARAAIAAGISGVFMETHPDPENALSDGPNMWPISRLKPLLETMKELDEVVKRHGFIEDQS.

The protein belongs to the KdsA family.

Its subcellular location is the cytoplasm. The catalysed reaction is D-arabinose 5-phosphate + phosphoenolpyruvate + H2O = 3-deoxy-alpha-D-manno-2-octulosonate-8-phosphate + phosphate. The protein operates within carbohydrate biosynthesis; 3-deoxy-D-manno-octulosonate biosynthesis; 3-deoxy-D-manno-octulosonate from D-ribulose 5-phosphate: step 2/3. Its pathway is bacterial outer membrane biogenesis; lipopolysaccharide biosynthesis. This chain is 2-dehydro-3-deoxyphosphooctonate aldolase, found in Hydrogenovibrio crunogenus (strain DSM 25203 / XCL-2) (Thiomicrospira crunogena).